The chain runs to 244 residues: Sepiapterin reductase (244 aa).

NADP(+) is bound by residues 9–15, 40–42, 66–67, and Asn-93; these read GAGKGIG, SRT, and DI. Residue Phe-99 coordinates substrate. Residue Thr-116 participates in NADP(+) binding. Residues Ser-145 and Tyr-158 each coordinate substrate. NADP(+) is bound by residues Tyr-158, Lys-162, and 191–196; that span reads VYTPMW. Trp-196 contributes to the substrate binding site.

This sequence belongs to the short-chain dehydrogenases/reductases (SDR) family. In terms of assembly, homodimer.

The protein localises to the cytoplasm. The enzyme catalyses L-threo-7,8-dihydrobiopterin + NADP(+) = L-sepiapterin + NADPH + H(+). It catalyses the reaction L-threo-tetrahydrobiopterin + 2 NADP(+) = 6-pyruvoyl-5,6,7,8-tetrahydropterin + 2 NADPH + 2 H(+). Its activity is regulated as follows. Slightly inhibited by N-acetyldopamine but not by N-acetylserotonin or melatonin. Catalyzes the final reductions in tetra-hydrobiopterin biosynthesis to form 5,6,7,8-tetrahydrobiopterin. This Chlorobaculum tepidum (strain ATCC 49652 / DSM 12025 / NBRC 103806 / TLS) (Chlorobium tepidum) protein is Sepiapterin reductase.